The primary structure comprises 303 residues: NAD kinase (303 aa).

The active-site Proton acceptor is the Asp71. Residues 71–72, 145–146, Arg156, Arg173, Asp175, 186–191, and Gln245 each bind NAD(+); these read DG, ND, and TGYSLS.

This sequence belongs to the NAD kinase family. The cofactor is a divalent metal cation.

It is found in the cytoplasm. The enzyme catalyses NAD(+) + ATP = ADP + NADP(+) + H(+). Its function is as follows. Involved in the regulation of the intracellular balance of NAD and NADP, and is a key enzyme in the biosynthesis of NADP. Catalyzes specifically the phosphorylation on 2'-hydroxyl of the adenosine moiety of NAD to yield NADP. This Magnetococcus marinus (strain ATCC BAA-1437 / JCM 17883 / MC-1) protein is NAD kinase.